The primary structure comprises 670 residues: DNA ligase (670 aa).

NAD(+) is bound by residues 31 to 35, 76 to 77, and Glu108; these read DAEYD and SL. Lys110 functions as the N6-AMP-lysine intermediate in the catalytic mechanism. Residues Arg131, Glu166, Lys271, and Lys295 each coordinate NAD(+). Zn(2+) is bound by residues Cys388, Cys391, Cys406, and Cys412. The BRCT domain occupies 579 to 668; it reads NIGGSLSGKK…NTPALKKETS (90 aa).

The protein belongs to the NAD-dependent DNA ligase family. LigA subfamily. It depends on Mg(2+) as a cofactor. Mn(2+) serves as cofactor.

The enzyme catalyses NAD(+) + (deoxyribonucleotide)n-3'-hydroxyl + 5'-phospho-(deoxyribonucleotide)m = (deoxyribonucleotide)n+m + AMP + beta-nicotinamide D-nucleotide.. Functionally, DNA ligase that catalyzes the formation of phosphodiester linkages between 5'-phosphoryl and 3'-hydroxyl groups in double-stranded DNA using NAD as a coenzyme and as the energy source for the reaction. It is essential for DNA replication and repair of damaged DNA. This is DNA ligase from Neorickettsia sennetsu (strain ATCC VR-367 / Miyayama) (Ehrlichia sennetsu).